A 316-amino-acid polypeptide reads, in one-letter code: Aspartate carbamoyltransferase catalytic subunit (316 aa).

Positions 58 and 59 each coordinate carbamoyl phosphate. Lysine 86 serves as a coordination point for L-aspartate. Arginine 108, histidine 136, and glutamine 139 together coordinate carbamoyl phosphate. Arginine 169 and arginine 223 together coordinate L-aspartate. Carbamoyl phosphate contacts are provided by glycine 264 and proline 265.

It belongs to the aspartate/ornithine carbamoyltransferase superfamily. ATCase family. As to quaternary structure, heterododecamer (2C3:3R2) of six catalytic PyrB chains organized as two trimers (C3), and six regulatory PyrI chains organized as three dimers (R2).

The enzyme catalyses carbamoyl phosphate + L-aspartate = N-carbamoyl-L-aspartate + phosphate + H(+). It participates in pyrimidine metabolism; UMP biosynthesis via de novo pathway; (S)-dihydroorotate from bicarbonate: step 2/3. Functionally, catalyzes the condensation of carbamoyl phosphate and aspartate to form carbamoyl aspartate and inorganic phosphate, the committed step in the de novo pyrimidine nucleotide biosynthesis pathway. This chain is Aspartate carbamoyltransferase catalytic subunit, found in Granulibacter bethesdensis (strain ATCC BAA-1260 / CGDNIH1).